The chain runs to 1620 residues: MKLEQRIFFLICLVINSFSNCSLLVAPDGYYNIYRENKIENILNLKPNGNKSQDSYYPDVCSKAVKNKEGVKSFILSSFPLSTKEYANVIVTKGSHMTLGDGEYHQIFNINRFLNIVCVEGSLVFSTKDVVYMSALVILPGGNFECIDCTIKFRDLYPTNSLIDPFGFLPGIITLGGSLSLLGKQKTVYSAVLIDENILEVQDISSLDIFNGYSLFIFSESFPLGKASTFTFNSNQIKVLEIKIPKTDKSIRVFFYSRFSTFSTSTTASIHITGNSNVHIENFYIDSFGRTTNDQYSDTELIFSQDDPNLITGFINGSNQRFRSSLYIEHSNNVTIKNSVILENRGETRSPLIFFGSNVNISGNIISSKSGSSLIAQYGTENIQSTNNYYSLSLPLLKSLNSTLDSMDYGNEGNGIFSISPKINSINDIFNGQIIAINHIILSDRSSITGFDKDCYSPCYNDSIRVSSKVQHSVEFKITGSTFISSSNYSESSFLFRISETGSKQSSFYKIINSNLSYPISVLLENNAFILDNVYGFGNFTINGLIKRLDIINSTLDPSVTSSISLSNFSKAISIQNSFMDYRSFQKQNNQIYGSIITPYLYYFENTMNLIKVSKMYPNVNHQILAGTVLNMGIEIIIIAPLFGKMDCIFEDESGIQTIPFNKSSNSCVLPYLFKNEGSFNVRVTLSLTKSLDNIIFQVYFPMVTVFNIYSFYSGWAMIDSNIEKEIIIDGNIFKKGCQQQVLGNCTISTNSKLITGLPSVTESDKLNRLFSSGITSINPYEPVTITIPIDKESKKNQIQLFFTHQPIDIETSLLSIYVENQPIFLLEPLQSNLDSTFKNLTFHYENSKSLEKIKITFITRGDIYLTSTAIYSSTNQPIYNEVIGINEQLNILAIVLPITISLFAAASILAGYLVIKKYKKPNMYYNRNTNGNIGMKVFSTKFKRRPKKVIPLSIPLSTNRITKKSLQSLDSMAENPVILLSIPELEKANEPEFNPEKTFLQESELLDLPTPKVEPEEPRINIVPLPRFPTVYKKEDNDKLLKELNITGPITSENIESFFEVDVGLPSLIIKNESEIILQEIDYIETGEIQEMEGSFLEDKSTDTTVIVTKSDGLPKFFQTKVFSKRFNDISKFDNDFFDLKEYIVEHQEESFEIPFMTSEDEVDETKINIIDFLLSPKSNKVALNMYLKSFQNRNHKLCYGKYGSNKNSILVIEGTSYYYDCTDVRLPISTPRSNLNFGITDGNKCIVDRKYRERLQYINVYSEPFRIYTLFPDSNDNVTITTSECCKEIDPFGSLDVDIFVTLKTTTKFNEKVTIRYETDDKELAFSTFVYLNLESQVSSKIDFDEIVLEKYLSEGSFGVVYSAIWRSSSVAVKLFKHHYSKDEIDKETSILSKIKHPNIVSFIGSLNFLNTYGIVIDYHPRGSLNYYTRNQNIKLSMVQNIRISLDISRACSFLHKNGIIHRDLKPDNVLIVSFDPDSSICAKISDFGTCREINGKHELNSKAGTTRYMSPEILEGLPYTYSTDVYSFAILFFELLSGRVPFREIPKREIPRFVRLGTRPRLDQDVFADNDISLILLACWNPNPRGRPTFDTLIDLLEKLLKKYKERAKRNKKNQNQ.

Positions 1–19 (MKLEQRIFFLICLVINSFS) are cleaved as a signal peptide. Residues 20 to 891 (NCSLLVAPDG…EVIGINEQLN (872 aa)) are Extracellular-facing. The chain crosses the membrane as a helical span at residues 892 to 912 (ILAIVLPITISLFAAASILAG). At 913-1620 (YLVIKKYKKP…AKRNKKNQNQ (708 aa)) the chain is on the cytoplasmic side. The Protein kinase domain maps to 1349–1604 (IVLEKYLSEG…TLIDLLEKLL (256 aa)). ATP is bound by residues 1355 to 1363 (LSEGSFGVV) and K1376. Residue D1466 is the Proton acceptor of the active site.

In the N-terminal section; belongs to the GDT family. This sequence in the C-terminal section; belongs to the protein kinase superfamily. TKL Ser/Thr protein kinase family.

It is found in the membrane. The enzyme catalyses L-seryl-[protein] + ATP = O-phospho-L-seryl-[protein] + ADP + H(+). The catalysed reaction is L-threonyl-[protein] + ATP = O-phospho-L-threonyl-[protein] + ADP + H(+). The chain is Probable serine/threonine-protein kinase gdt4 (gdt4) from Dictyostelium discoideum (Social amoeba).